Reading from the N-terminus, the 510-residue chain is Protein disulfide-isomerase (510 aa).

The N-terminal stretch at 1–19 is a signal peptide; it reads MLRRALLCLAVAAAPGLYA. The Thioredoxin 1 domain maps to 20-136; it reads DAPEEEDHVL…IVNWLKKRTG (117 aa). Active-site nucleophile residues include Cys-55 and Cys-58. Cys-55 and Cys-58 form a disulfide bridge. The residue at position 202 (Lys-202) is an N6-acetyllysine. 2 positions are modified to N6-succinyllysine: Lys-224 and Lys-273. A phosphoserine mark is found at Ser-333 and Ser-359. The Thioredoxin 2 domain maps to 351-477; sequence GKIKPHLMSQ…FKKFLESGGQ (127 aa). Active-site nucleophile residues include Cys-399 and Cys-402. Residues Cys-399 and Cys-402 are joined by a disulfide bond. Ser-429 carries the phosphoserine modification. The disordered stretch occupies residues 473–510; it reads ESGGQDGAGDDDDLEDLEEAEEPDMEEDDDQKAVKDEL. Positions 480–502 are enriched in acidic residues; it reads AGDDDDLEDLEEAEEPDMEEDDD. Residues 507 to 510 carry the Prevents secretion from ER motif; it reads KDEL.

The protein belongs to the protein disulfide isomerase family. In terms of assembly, heterodimer; heterodimerizes with the protein microsomal triglyceride transfer MTTP. Homodimer. Homodimer. Monomers and homotetramers may also occur. Interacts with P4HA2, forming a heterotetramer consisting of 2 alpha subunits (P4HA2) and 2 beta (P4HB), where P4HB plays the role of a structural subunit; this tetramer catalyzes the formation of 4-hydroxyproline in collagen. Also constitutes the structural subunit of the microsomal triacylglycerol transfer protein MTTP in mammalian cells. Stabilizes both enzymes and retain them in the ER without contributing to the catalytic activity. Binds UBQLN1. Interacts with ERO1B. Interacts with ILDR2. Interacts with ERN1/IRE1A (via N-terminus); the interaction is enhanced by phosphorylation of P4HB by FAM20C in response to endoplasmic reticulum stress and results in attenuation of ERN1 activity. Phosphorylation of Ser-359 by FAM20C is induced by endoplasmic reticulum stress and results in a functional switch from oxidoreductase to molecular chaperone. It also promotes interaction with ERN1.

The protein resides in the endoplasmic reticulum. Its subcellular location is the endoplasmic reticulum lumen. It localises to the melanosome. The protein localises to the cell membrane. It catalyses the reaction Catalyzes the rearrangement of -S-S- bonds in proteins.. Functionally, this multifunctional protein catalyzes the formation, breakage and rearrangement of disulfide bonds. At the cell surface, seems to act as a reductase that cleaves disulfide bonds of proteins attached to the cell. May therefore cause structural modifications of exofacial proteins. Inside the cell, seems to form/rearrange disulfide bonds of nascent proteins. At high concentrations and following phosphorylation by FAM20C, functions as a chaperone that inhibits aggregation of misfolded proteins. At low concentrations, facilitates aggregation (anti-chaperone activity). May be involved with other chaperones in the structural modification of the TG precursor in hormone biogenesis. Also acts as a structural subunit of various enzymes such as prolyl 4-hydroxylase and microsomal triacylglycerol transfer protein MTTP. Receptor for LGALS9; the interaction retains P4HB at the cell surface of Th2 T helper cells, increasing disulfide reductase activity at the plasma membrane, altering the plasma membrane redox state and enhancing cell migration. The protein is Protein disulfide-isomerase (P4HB) of Macaca fuscata fuscata (Japanese macaque).